The primary structure comprises 468 residues: Uronate isomerase (468 aa).

Belongs to the metallo-dependent hydrolases superfamily. Uronate isomerase family.

It catalyses the reaction D-glucuronate = D-fructuronate. It carries out the reaction aldehydo-D-galacturonate = keto-D-tagaturonate. Its pathway is carbohydrate metabolism; pentose and glucuronate interconversion. This is Uronate isomerase from Lachnospira eligens (strain ATCC 27750 / DSM 3376 / VPI C15-48 / C15-B4) (Eubacterium eligens).